Consider the following 461-residue polypeptide: Cytochrome c biogenesis protein CcsB (461 aa).

3 helical membrane-spanning segments follow: residues 32–52 (LRLA…GTVI), 91–111 (TWWF…CTFT), and 178–198 (IGPI…IWGA).

Belongs to the Ccs1/CcsB family. May interact with CcsA.

Its subcellular location is the cellular thylakoid membrane. Required during biogenesis of c-type cytochromes (cytochrome c6 and cytochrome f) at the step of heme attachment. The sequence is that of Cytochrome c biogenesis protein CcsB from Trichormus variabilis (strain ATCC 29413 / PCC 7937) (Anabaena variabilis).